The primary structure comprises 170 residues: MDLKQYITIVPDFPKPGILFKDITTLMDNGEAYKYATDQIVEYAREKQIDIVVGPEARGFIIGCPVAYALGVGFAPVRKEGKLPREVVRVEYGLEYGTDVLTMHKDAIKPGQRVLITDDLLATGGTMRATIDLVEQLGGVVAGLAFLIELTELGGRKKLEGYDILTLMQF.

The protein belongs to the purine/pyrimidine phosphoribosyltransferase family. Homodimer.

Its subcellular location is the cytoplasm. It catalyses the reaction AMP + diphosphate = 5-phospho-alpha-D-ribose 1-diphosphate + adenine. It participates in purine metabolism; AMP biosynthesis via salvage pathway; AMP from adenine: step 1/1. Catalyzes a salvage reaction resulting in the formation of AMP, that is energically less costly than de novo synthesis. This Geobacillus thermodenitrificans (strain NG80-2) protein is Adenine phosphoribosyltransferase.